The chain runs to 113 residues: Transcriptional regulator RamA (113 aa).

The HTH araC/xylS-type domain maps to 9–107 (DTIVEWIDDN…NQPPGAYRKE (99 aa)). DNA-binding regions (H-T-H motif) lie at residues 26–47 (DDIA…LQYK) and 74–97 (VYDI…TRTF).

As to quaternary structure, monomer. Interacts with the C-terminus of RNAP subunit RpoA when part of class I or class II promoter complexes. Also interacts with sigma-70/RpoD in class II promoter complexes.

Its function is as follows. Transcriptional regulator. Binds to regulatory regions of target genes, including its own gene, efflux pump operon acrAB, antisense RNA gene micF, and various genes involved in lipid A biosynthesis, including lpxO and lpxL-2. Regulates expression of many genes, perhaps including its own; activates various lipid A biosynthetic genes, and as a result of activating acrAB, confers multidrug resistance. Plays a role in virulence and survival in host cells. This chain is Transcriptional regulator RamA, found in Klebsiella pneumoniae subsp. pneumoniae (strain HS11286).